A 285-amino-acid polypeptide reads, in one-letter code: Bis(5'-nucleosyl)-tetraphosphatase, symmetrical (285 aa).

It belongs to the Ap4A hydrolase family.

The enzyme catalyses P(1),P(4)-bis(5'-adenosyl) tetraphosphate + H2O = 2 ADP + 2 H(+). Hydrolyzes diadenosine 5',5'''-P1,P4-tetraphosphate to yield ADP. The chain is Bis(5'-nucleosyl)-tetraphosphatase, symmetrical from Colwellia psychrerythraea (strain 34H / ATCC BAA-681) (Vibrio psychroerythus).